The sequence spans 420 residues: Serine hydroxymethyltransferase (420 aa).

Residues Leu121 and 125–127 (GHL) contribute to the (6S)-5,6,7,8-tetrahydrofolate site. N6-(pyridoxal phosphate)lysine is present on Lys229.

This sequence belongs to the SHMT family. As to quaternary structure, homodimer. Pyridoxal 5'-phosphate serves as cofactor.

It localises to the cytoplasm. The enzyme catalyses (6R)-5,10-methylene-5,6,7,8-tetrahydrofolate + glycine + H2O = (6S)-5,6,7,8-tetrahydrofolate + L-serine. The protein operates within one-carbon metabolism; tetrahydrofolate interconversion. It functions in the pathway amino-acid biosynthesis; glycine biosynthesis; glycine from L-serine: step 1/1. Functionally, catalyzes the reversible interconversion of serine and glycine with tetrahydrofolate (THF) serving as the one-carbon carrier. This reaction serves as the major source of one-carbon groups required for the biosynthesis of purines, thymidylate, methionine, and other important biomolecules. Also exhibits THF-independent aldolase activity toward beta-hydroxyamino acids, producing glycine and aldehydes, via a retro-aldol mechanism. The sequence is that of Serine hydroxymethyltransferase from Aggregatibacter actinomycetemcomitans (Actinobacillus actinomycetemcomitans).